Reading from the N-terminus, the 619-residue chain is ESX-2 secretion system protein EccA2 (619 aa).

An ATP-binding site is contributed by 373–380 (GPPGTGKT).

This sequence belongs to the CbxX/CfxQ family. In terms of assembly, part of the ESX-2 / type VII secretion system (T7SS), which is composed of cytosolic and membrane components. Residues 522-619 interact with an artificial EsxB-EsxA heterodimer from the adjacent ESX-1 locus.

It is found in the cytoplasm. Its function is as follows. Shows ATPase activity. Could provide energy for export of ESX-2 substrates. The sequence is that of ESX-2 secretion system protein EccA2 (eccA2) from Mycobacterium tuberculosis (strain ATCC 25618 / H37Rv).